The primary structure comprises 852 residues: Bifunctional heparan sulfate N-deacetylase/N-sulfotransferase 1 (852 aa).

At M1–R13 the chain is on the cytoplasmic side. Residues P14–N34 form a helical; Signal-anchor for type II membrane protein membrane-spanning segment. The heparan sulfate N-deacetylase 1 stretch occupies residues N34–S574. The Lumenal segment spans residues N35–A852. N-linked (GlcNAc...) asparagine glycans are attached at residues N50, N72, N261, N328, N377, N428, and N576. The heparan sulfate N-sulfotransferase 1 stretch occupies residues I575–A852. K592 acts as the For sulfotransferase activity in catalysis. Residue K592–T596 participates in 3'-phosphoadenylyl sulfate binding. N-linked (GlcNAc...) asparagine glycosylation is present at N607. S686 serves as a coordination point for 3'-phosphoadenylyl sulfate. N712 carries an N-linked (GlcNAc...) asparagine glycan. A disulfide bond links C789 and C798. K803–Y807 is a 3'-phosphoadenylyl sulfate binding site.

Belongs to the sulfotransferase 1 family. NDST subfamily. In terms of assembly, monomer. In terms of tissue distribution, present in some specific neurons in head and tail regions and muscles.

The protein localises to the golgi apparatus membrane. The catalysed reaction is alpha-D-glucosaminyl-[heparan sulfate](n) + 3'-phosphoadenylyl sulfate = N-sulfo-alpha-D-glucosaminyl-[heparan sulfate](n) + adenosine 3',5'-bisphosphate + 2 H(+). It participates in glycan metabolism; heparan sulfate biosynthesis. The protein operates within glycan metabolism; heparin biosynthesis. Its function is as follows. Essential bifunctional enzyme that catalyzes both the N-deacetylation and the N-sulfation of glucosamine (GlcNAc) of the glycosaminoglycan in heparan sulfate. Modifies the GlcNAc-GlcA disaccharide repeating sugar backbone to make N-sulfated heparosan, a prerequisite substrate for later modifications in heparin biosynthesis. This chain is Bifunctional heparan sulfate N-deacetylase/N-sulfotransferase 1 (hst-1), found in Caenorhabditis elegans.